The chain runs to 361 residues: Phospho-N-acetylmuramoyl-pentapeptide-transferase (361 aa).

10 helical membrane-spanning segments follow: residues 27–47, 72–92, 98–118, 135–155, 169–189, 200–220, 240–260, 263–283, 289–309, and 338–358; these read GAFF…INLL, TPTM…LLWA, YVWL…MDDF, LAMG…LHPE, TLIN…AGSA, GLAI…AYAV, IFVF…YNAP, AVFM…AIAV, IVLV…IIQV, and QIVI…LATL.

This sequence belongs to the glycosyltransferase 4 family. MraY subfamily. It depends on Mg(2+) as a cofactor.

It localises to the cell inner membrane. The enzyme catalyses UDP-N-acetyl-alpha-D-muramoyl-L-alanyl-gamma-D-glutamyl-meso-2,6-diaminopimeloyl-D-alanyl-D-alanine + di-trans,octa-cis-undecaprenyl phosphate = di-trans,octa-cis-undecaprenyl diphospho-N-acetyl-alpha-D-muramoyl-L-alanyl-D-glutamyl-meso-2,6-diaminopimeloyl-D-alanyl-D-alanine + UMP. It participates in cell wall biogenesis; peptidoglycan biosynthesis. Its function is as follows. Catalyzes the initial step of the lipid cycle reactions in the biosynthesis of the cell wall peptidoglycan: transfers peptidoglycan precursor phospho-MurNAc-pentapeptide from UDP-MurNAc-pentapeptide onto the lipid carrier undecaprenyl phosphate, yielding undecaprenyl-pyrophosphoryl-MurNAc-pentapeptide, known as lipid I. In Dinoroseobacter shibae (strain DSM 16493 / NCIMB 14021 / DFL 12), this protein is Phospho-N-acetylmuramoyl-pentapeptide-transferase.